We begin with the raw amino-acid sequence, 167 residues long: Ubiquitin-like-conjugating enzyme ATG10 (167 aa).

The Glycyl thioester intermediate role is filled by cysteine 133.

This sequence belongs to the ATG10 family. In terms of assembly, forms homooligomers. Interacts with ATG7 and ATG12.

The protein resides in the preautophagosomal structure membrane. In terms of biological role, E2-like enzyme required for the cytoplasm to vacuole transport (Cvt), autophagy and nucleophagy. Acts as an E2-like enzyme that catalyzes the conjugation of ATG12 to ATG5. ATG12 conjugation to ATG5 is required for proper localization of ATG8 to the preautophagosomal structure (PAS). Likely serves as an ATG5-recognition molecule. This is Ubiquitin-like-conjugating enzyme ATG10 (ATG10) from Saccharomyces cerevisiae (strain ATCC 204508 / S288c) (Baker's yeast).